Here is a 288-residue protein sequence, read N- to C-terminus: Alpha/beta hydrolase domain-containing protein 17B (288 aa).

Active-site charge relay system residues include serine 170, aspartate 235, and histidine 264.

It belongs to the AB hydrolase superfamily. ABHD17 family. In terms of processing, palmitoylated on cysteine residues located in a cysteine cluster at the N-terminus which promotes membrane localization.

It localises to the cell membrane. It is found in the recycling endosome membrane. The protein resides in the cell projection. The protein localises to the dendritic spine. Its subcellular location is the postsynaptic density membrane. The enzyme catalyses S-hexadecanoyl-L-cysteinyl-[protein] + H2O = L-cysteinyl-[protein] + hexadecanoate + H(+). Hydrolyzes fatty acids from S-acylated cysteine residues in proteins. Has depalmitoylating activity towards nras. This chain is Alpha/beta hydrolase domain-containing protein 17B, found in Xenopus laevis (African clawed frog).